We begin with the raw amino-acid sequence, 396 residues long: MAKEKFDRSKSHANIGTIGHVDHGKTTLTAAITTVLHKKSGKGTAMAYDQIDGAPEERERGITISTAHVEYETETRHYAHVDCPGHADYVKNMITGAAQMDGAILVVSAADGPMPQTREHILLSKNVGVPYIVVFLNKCDMVDDEELLELVEMEVRDLLSEYDFPGDDVPVVKGSALKALEGDAEWEAKIFELMDAVDEYIPTPERDTEKPFMMPVEDVFSITGRGTVATGRVERGQVKVGDEVEIIGLQEENKKTTVTGVEMFRKLLDYAEAGDNIGALLRGVSREEIQRGQVLAKPGTITPHSKFKAEVYVLSKEEGGRHTPFFSNYRPQFYFRTTDVTGIIHLPEGVEMVMPGDNTEMNVELISTIAIEEGTRFSIREGGRTVGSGVVSTITE.

The tr-type G domain occupies 10 to 205 (KSHANIGTIG…AVDEYIPTPE (196 aa)). Residues 19-26 (GHVDHGKT) are G1. 19–26 (GHVDHGKT) is a GTP binding site. Thr26 contacts Mg(2+). Residues 61-65 (GITIS) are G2. Residues 82–85 (DCPG) are G3. GTP contacts are provided by residues 82–86 (DCPGH) and 137–140 (NKCD). Positions 137-140 (NKCD) are G4. Positions 175–177 (SAL) are G5. Thr385 carries the phosphothreonine modification.

It belongs to the TRAFAC class translation factor GTPase superfamily. Classic translation factor GTPase family. EF-Tu/EF-1A subfamily. As to quaternary structure, monomer. Interacts with BrxC. Post-translationally, phosphorylated on Thr-385 in vitro by PrkC in the presence of poly-L-lysine or myelin basic protein, dephosphorylated by PrpC.

It is found in the cytoplasm. The catalysed reaction is GTP + H2O = GDP + phosphate + H(+). Its function is as follows. GTP hydrolase that promotes the GTP-dependent binding of aminoacyl-tRNA to the A-site of ribosomes during protein biosynthesis. The chain is Elongation factor Tu from Bacillus subtilis (strain 168).